Consider the following 463-residue polypeptide: NADH dehydrogenase [ubiquinone] iron-sulfur protein 2, mitochondrial (463 aa).

The N-terminal 33 residues, 1–33, are a transit peptide targeting the mitochondrion; it reads MAALRALRCLRGVGAPVLRPGSGIRLPSQPSRG. K62 bears the N6-acetyllysine mark. Position 118 is a symmetric dimethylarginine (R118). 3 residues coordinate [4Fe-4S] cluster: C326, C332, and C347.

Belongs to the complex I 49 kDa subunit family. Core subunit of respiratory chain NADH dehydrogenase (Complex I) which is composed of 45 different subunits. Component of the iron-sulfur (IP) fragment of the enzyme. Interacts with NDUFAF3. Interacts with NDUFAF7. Interacts with CERS2. The cofactor is [4Fe-4S] cluster. Dimethylation at Arg-118 by NDUFAF7 takes place after NDUFS2 assembles into the complex I, leading to stabilize the early intermediate complex.

It localises to the mitochondrion inner membrane. It carries out the reaction a ubiquinone + NADH + 5 H(+)(in) = a ubiquinol + NAD(+) + 4 H(+)(out). Functionally, core subunit of the mitochondrial membrane respiratory chain NADH dehydrogenase (Complex I) which catalyzes electron transfer from NADH through the respiratory chain, using ubiquinone as an electron acceptor. Essential for the catalytic activity and assembly of complex I. Redox-sensitive, critical component of the oxygen-sensing pathway in the pulmonary vasculature which plays a key role in acute pulmonary oxygen-sensing and hypoxic pulmonary vasoconstriction. Plays an important role in carotid body sensing of hypoxia. Essential for glia-like neural stem and progenitor cell proliferation, differentiation and subsequent oligodendrocyte or neuronal maturation. This Mus musculus (Mouse) protein is NADH dehydrogenase [ubiquinone] iron-sulfur protein 2, mitochondrial (Ndufs2).